Here is a 118-residue protein sequence, read N- to C-terminus: NADH-quinone oxidoreductase subunit A 2 (118 aa).

The next 3 membrane-spanning stretches (helical) occupy residues 5–25 (YLPI…SLIF), 62–82 (IIAM…PWAV), and 87–107 (LGMF…VGYI).

The protein belongs to the complex I subunit 3 family. NDH-1 is composed of 14 different subunits. Subunits NuoA, H, J, K, L, M, N constitute the membrane sector of the complex.

The protein resides in the cell inner membrane. It catalyses the reaction a quinone + NADH + 5 H(+)(in) = a quinol + NAD(+) + 4 H(+)(out). NDH-1 shuttles electrons from NADH, via FMN and iron-sulfur (Fe-S) centers, to quinones in the respiratory chain. The immediate electron acceptor for the enzyme in this species is believed to be ubiquinone. Couples the redox reaction to proton translocation (for every two electrons transferred, four hydrogen ions are translocated across the cytoplasmic membrane), and thus conserves the redox energy in a proton gradient. In Geotalea uraniireducens (strain Rf4) (Geobacter uraniireducens), this protein is NADH-quinone oxidoreductase subunit A 2.